The primary structure comprises 274 residues: MPELPEVETSMRGISPYLVGQKIKEIIVRQPKLRWAVSSELSTMQGATIIEIYRRAKYLIIQTDKGDILVHLGMSGSLGILSVKENKAIDKHDHIDLITENGVILRYNDPRKFGTWLWAEQAETAELLANLGPEPLSEAFTSGYLFEKSRNKTVAVKNFIMNNAIVVGVGNIYACESLFMAGIHPELAAQNLTAKQCERLVTVIKEVLTKAIIQGGTTLKDFIQPDGKPGYFAQVLQVYGRKGEECNDCGSIIEAKVIGQRNSFYCPKCQRLPK.

Catalysis depends on P2, which acts as the Schiff-base intermediate with DNA. E3 acts as the Proton donor in catalysis. The active-site Proton donor; for beta-elimination activity is K57. Positions 92, 111, and 152 each coordinate DNA. The FPG-type zinc finger occupies 237–271 (QVYGRKGEECNDCGSIIEAKVIGQRNSFYCPKCQR). The active-site Proton donor; for delta-elimination activity is R261.

It belongs to the FPG family. In terms of assembly, monomer. Requires Zn(2+) as cofactor.

The enzyme catalyses Hydrolysis of DNA containing ring-opened 7-methylguanine residues, releasing 2,6-diamino-4-hydroxy-5-(N-methyl)formamidopyrimidine.. It carries out the reaction 2'-deoxyribonucleotide-(2'-deoxyribose 5'-phosphate)-2'-deoxyribonucleotide-DNA = a 3'-end 2'-deoxyribonucleotide-(2,3-dehydro-2,3-deoxyribose 5'-phosphate)-DNA + a 5'-end 5'-phospho-2'-deoxyribonucleoside-DNA + H(+). Involved in base excision repair of DNA damaged by oxidation or by mutagenic agents. Acts as a DNA glycosylase that recognizes and removes damaged bases. Has a preference for oxidized purines, such as 7,8-dihydro-8-oxoguanine (8-oxoG). Has AP (apurinic/apyrimidinic) lyase activity and introduces nicks in the DNA strand. Cleaves the DNA backbone by beta-delta elimination to generate a single-strand break at the site of the removed base with both 3'- and 5'-phosphates. The polypeptide is Formamidopyrimidine-DNA glycosylase (Glaesserella parasuis serovar 5 (strain SH0165) (Haemophilus parasuis)).